Reading from the N-terminus, the 445-residue chain is Phosphoglucosamine mutase (445 aa).

Ser-102 serves as the catalytic Phosphoserine intermediate. Residues Ser-102, Asp-241, Asp-243, and Asp-245 each contribute to the Mg(2+) site. Ser-102 bears the Phosphoserine mark.

The protein belongs to the phosphohexose mutase family. Mg(2+) is required as a cofactor. Activated by phosphorylation.

The enzyme catalyses alpha-D-glucosamine 1-phosphate = D-glucosamine 6-phosphate. In terms of biological role, catalyzes the conversion of glucosamine-6-phosphate to glucosamine-1-phosphate. The chain is Phosphoglucosamine mutase from Acinetobacter baumannii (strain AB0057).